The primary structure comprises 465 residues: Azaphilone cluster-specific transcription factor azaR (465 aa).

The span at Met-1–His-16 shows a compositional bias: low complexity. The disordered stretch occupies residues Met-1–Ser-25. The zn(2)-C6 fungal-type DNA-binding region spans Cys-27–Cys-53.

It localises to the nucleus. Its function is as follows. Transcription factor that regulates the expression of the gene cluster that mediates the biosynthesis of azaphilones, a class of fungal metabolites characterized by a highly oxygenated pyrano-quinone bicyclic core and exhibiting a broad range of bioactivities. The protein is Azaphilone cluster-specific transcription factor azaR of Aspergillus niger (strain ATCC 1015 / CBS 113.46 / FGSC A1144 / LSHB Ac4 / NCTC 3858a / NRRL 328 / USDA 3528.7).